We begin with the raw amino-acid sequence, 300 residues long: 4-hydroxy-tetrahydrodipicolinate synthase (300 aa).

Residue threonine 45 participates in pyruvate binding. Tyrosine 140 serves as the catalytic Proton donor/acceptor. The active-site Schiff-base intermediate with substrate is lysine 169. Valine 210 lines the pyruvate pocket.

Belongs to the DapA family. Homotetramer; dimer of dimers.

The protein resides in the cytoplasm. The enzyme catalyses L-aspartate 4-semialdehyde + pyruvate = (2S,4S)-4-hydroxy-2,3,4,5-tetrahydrodipicolinate + H2O + H(+). It functions in the pathway amino-acid biosynthesis; L-lysine biosynthesis via DAP pathway; (S)-tetrahydrodipicolinate from L-aspartate: step 3/4. Catalyzes the condensation of (S)-aspartate-beta-semialdehyde [(S)-ASA] and pyruvate to 4-hydroxy-tetrahydrodipicolinate (HTPA). The polypeptide is 4-hydroxy-tetrahydrodipicolinate synthase (Helicobacter acinonychis (strain Sheeba)).